The chain runs to 273 residues: Dermonecrotic toxin LdSicTox-alphaIB1avi (273 aa).

Histidine 5 is an active-site residue. Residues glutamate 25 and aspartate 27 each contribute to the Mg(2+) site. Histidine 41 acts as the Nucleophile in catalysis. 2 cysteine pairs are disulfide-bonded: cysteine 45/cysteine 51 and cysteine 47/cysteine 190. Aspartate 85 provides a ligand contact to Mg(2+). Residue asparagine 250 is glycosylated (N-linked (GlcNAc...) asparagine).

It belongs to the arthropod phospholipase D family. Class II subfamily. Requires Mg(2+) as cofactor. Expressed by the venom gland.

Its subcellular location is the secreted. The enzyme catalyses an N-(acyl)-sphingosylphosphocholine = an N-(acyl)-sphingosyl-1,3-cyclic phosphate + choline. It carries out the reaction an N-(acyl)-sphingosylphosphoethanolamine = an N-(acyl)-sphingosyl-1,3-cyclic phosphate + ethanolamine. It catalyses the reaction a 1-acyl-sn-glycero-3-phosphocholine = a 1-acyl-sn-glycero-2,3-cyclic phosphate + choline. The catalysed reaction is a 1-acyl-sn-glycero-3-phosphoethanolamine = a 1-acyl-sn-glycero-2,3-cyclic phosphate + ethanolamine. In terms of biological role, dermonecrotic toxins cleave the phosphodiester linkage between the phosphate and headgroup of certain phospholipids (sphingolipid and lysolipid substrates), forming an alcohol (often choline) and a cyclic phosphate. This toxin acts on sphingomyelin (SM). It may also act on ceramide phosphoethanolamine (CPE), lysophosphatidylcholine (LPC) and lysophosphatidylethanolamine (LPE), but not on lysophosphatidylserine (LPS), and lysophosphatidylglycerol (LPG). It acts by transphosphatidylation, releasing exclusively cyclic phosphate products as second products. Induces dermonecrosis, hemolysis, increased vascular permeability, edema, inflammatory response, and platelet aggregation. This chain is Dermonecrotic toxin LdSicTox-alphaIB1avi, found in Loxosceles deserta (Desert recluse spider).